The following is a 247-amino-acid chain: tRNA uridine(34) hydroxylase (247 aa).

Residues 124 to 218 (TKQNVIVIDT…YLEDTHNKNN (95 aa)) enclose the Rhodanese domain. The active-site Cysteine persulfide intermediate is the Cys-178.

It belongs to the TrhO family.

It carries out the reaction uridine(34) in tRNA + AH2 + O2 = 5-hydroxyuridine(34) in tRNA + A + H2O. Its function is as follows. Catalyzes oxygen-dependent 5-hydroxyuridine (ho5U) modification at position 34 in tRNAs. This Rickettsia typhi (strain ATCC VR-144 / Wilmington) protein is tRNA uridine(34) hydroxylase.